The primary structure comprises 794 residues: Phenylalanine--tRNA ligase beta subunit (794 aa).

Positions 39–154 (SSSFSSIITA…ANTPLGESAC (116 aa)) constitute a tRNA-binding domain. In terms of domain architecture, B5 spans 403–481 (PPSPTLTLRT…QPWKIEKKKA (79 aa)). Residues D457, D463, E466, and E467 each coordinate Mg(2+). Residues 697-793 (PIYPSSFRDI…QLDDTKGTID (97 aa)) form the FDX-ACB domain.

This sequence belongs to the phenylalanyl-tRNA synthetase beta subunit family. Type 1 subfamily. In terms of assembly, tetramer of two alpha and two beta subunits. It depends on Mg(2+) as a cofactor.

The protein localises to the cytoplasm. The catalysed reaction is tRNA(Phe) + L-phenylalanine + ATP = L-phenylalanyl-tRNA(Phe) + AMP + diphosphate + H(+). The chain is Phenylalanine--tRNA ligase beta subunit from Chlamydia abortus (strain DSM 27085 / S26/3) (Chlamydophila abortus).